Here is a 329-residue protein sequence, read N- to C-terminus: Vitamin B12 import system permease protein BtuC (329 aa).

Helical transmembrane passes span 18-38, 64-84, 91-111, 115-135, 149-169, 191-208, 243-263, 277-297, and 305-325; these read WLLS…CAGE, LAVL…QALF, PGLL…VLLG, LPGW…TLIL, LLAG…AIYF, WQQS…IWIC, GWMV…GLVI, VLLP…DVVA, and ELPI…WLLL.

Belongs to the binding-protein-dependent transport system permease family. FecCD subfamily. In terms of assembly, the complex is composed of two ATP-binding proteins (BtuD), two transmembrane proteins (BtuC) and a solute-binding protein (BtuF).

It localises to the cell inner membrane. Functionally, part of the ABC transporter complex BtuCDF involved in vitamin B12 import. Involved in the translocation of the substrate across the membrane. The polypeptide is Vitamin B12 import system permease protein BtuC (Salmonella arizonae (strain ATCC BAA-731 / CDC346-86 / RSK2980)).